Reading from the N-terminus, the 95-residue chain is Aspartyl/glutamyl-tRNA(Asn/Gln) amidotransferase subunit C (95 aa).

This sequence belongs to the GatC family. As to quaternary structure, heterotrimer of A, B and C subunits.

It carries out the reaction L-glutamyl-tRNA(Gln) + L-glutamine + ATP + H2O = L-glutaminyl-tRNA(Gln) + L-glutamate + ADP + phosphate + H(+). It catalyses the reaction L-aspartyl-tRNA(Asn) + L-glutamine + ATP + H2O = L-asparaginyl-tRNA(Asn) + L-glutamate + ADP + phosphate + 2 H(+). Its function is as follows. Allows the formation of correctly charged Asn-tRNA(Asn) or Gln-tRNA(Gln) through the transamidation of misacylated Asp-tRNA(Asn) or Glu-tRNA(Gln) in organisms which lack either or both of asparaginyl-tRNA or glutaminyl-tRNA synthetases. The reaction takes place in the presence of glutamine and ATP through an activated phospho-Asp-tRNA(Asn) or phospho-Glu-tRNA(Gln). The sequence is that of Aspartyl/glutamyl-tRNA(Asn/Gln) amidotransferase subunit C from Nitrosomonas europaea (strain ATCC 19718 / CIP 103999 / KCTC 2705 / NBRC 14298).